Reading from the N-terminus, the 268-residue chain is NADPH-dependent 7-cyano-7-deazaguanine reductase (268 aa).

79 to 81 serves as a coordination point for substrate; the sequence is VES. An NADPH-binding site is contributed by 81–82; it reads SK. The Thioimide intermediate role is filled by C176. Residue D183 is the Proton donor of the active site. 215 to 216 provides a ligand contact to substrate; it reads HE. An NADPH-binding site is contributed by 244–245; sequence RG.

It belongs to the GTP cyclohydrolase I family. QueF type 2 subfamily. In terms of assembly, homodimer.

The protein resides in the cytoplasm. It carries out the reaction 7-aminomethyl-7-carbaguanine + 2 NADP(+) = 7-cyano-7-deazaguanine + 2 NADPH + 3 H(+). It participates in tRNA modification; tRNA-queuosine biosynthesis. Functionally, catalyzes the NADPH-dependent reduction of 7-cyano-7-deazaguanine (preQ0) to 7-aminomethyl-7-deazaguanine (preQ1). The sequence is that of NADPH-dependent 7-cyano-7-deazaguanine reductase from Saccharophagus degradans (strain 2-40 / ATCC 43961 / DSM 17024).